The sequence spans 338 residues: Ribosomal RNA small subunit methyltransferase C (338 aa).

Belongs to the methyltransferase superfamily. RsmC family. In terms of assembly, monomer.

The protein resides in the cytoplasm. It carries out the reaction guanosine(1207) in 16S rRNA + S-adenosyl-L-methionine = N(2)-methylguanosine(1207) in 16S rRNA + S-adenosyl-L-homocysteine + H(+). In terms of biological role, specifically methylates the guanine in position 1207 of 16S rRNA in the 30S particle. The sequence is that of Ribosomal RNA small subunit methyltransferase C from Acinetobacter baylyi (strain ATCC 33305 / BD413 / ADP1).